Consider the following 429-residue polypeptide: Integral membrane protein GPR137C (429 aa).

Over residues 1–17 the composition is skewed to low complexity; it reads MRVSVPGPAAAAAPAAG. Positions 1 to 29 are disordered; that stretch reads MRVSVPGPAAAAAPAAGREPSTPGGGSGG. Residues 1 to 48 lie on the Lumenal side of the membrane; it reads MRVSVPGPAAAAAPAAGREPSTPGGGSGGGGAVAAASGAAVPGSVQLA. The helical transmembrane segment at 49-69 threads the bilayer; the sequence is LSVLHALLYAALFAFAYLQLW. The Cytoplasmic segment spans residues 70–83; sequence RLLLYRERRLSYQS. Residues 84–104 form a helical membrane-spanning segment; the sequence is LCLFLCLLWAALRTTLFSAAF. The Lumenal segment spans residues 105–120; that stretch reads SLSGSLPLLRPPAHLH. Residues 121-141 form a helical membrane-spanning segment; sequence FFPHWLLYCFPSCLQFSTLCL. Over 142 to 167 the chain is Cytoplasmic; sequence LNLYLAEVICKVRCATELDRHKILLH. Residues 168-188 traverse the membrane as a helical segment; sequence LGFIMASLLFLVVNLTCAMLV. Residues 189–205 lie on the Lumenal side of the membrane; sequence HGDVPENQLKWTVFVRA. Residues 206–226 traverse the membrane as a helical segment; it reads LINDSLFILCAISLVCYICKI. At 227–246 the chain is on the cytoplasmic side; that stretch reads TKMSSANVYLESKGMSLCQT. A helical transmembrane segment spans residues 247–267; the sequence is VVVGSVVILLYSSRACYNLVV. The Lumenal portion of the chain corresponds to 268–300; the sequence is VTISQDTLESPFNYGWDNLSDKAHVEDISGEEY. An N-linked (GlcNAc...) asparagine glycan is attached at N285. Residues 301–321 traverse the membrane as a helical segment; that stretch reads IVFGMVLFLWEHVPAWSVVLF. Over 322 to 429 the chain is Cytoplasmic; it reads FRAQRLNQNL…HHSLYVTPQN (108 aa).

It belongs to the GPR137 family.

It localises to the lysosome membrane. In terms of biological role, lysosomal integral membrane protein that may regulate MTORC1 complex translocation to lysosomes. The sequence is that of Integral membrane protein GPR137C (GPR137C) from Homo sapiens (Human).